A 463-amino-acid polypeptide reads, in one-letter code: uncharacterized protein (463 aa).

The next 6 membrane-spanning stretches (helical) occupy residues 3–23, 88–108, 112–132, 216–236, 245–265, and 276–296; these read IPPE…SLLV, VAAA…AELA, AIHG…PIAL, FSPA…DFLW, LLLL…SALI, and LPIA…AVAV. A disordered region spans residues 303 to 322; it reads VPGGSPPTSNPAPAAPSSNS. Pro residues predominate over residues 306–316; sequence GSPPTSNPAPA. Transmembrane regions (helical) follow at residues 323–343 and 419–439; these read VGSA…APPG and AGTL…AGMV.

It belongs to the mycobacterial PPE family.

The protein resides in the cell membrane. This is an uncharacterized protein from Mycobacterium tuberculosis (strain CDC 1551 / Oshkosh).